The sequence spans 418 residues: Tol-Pal system protein TolB (418 aa).

The signal sequence occupies residues 1–21 (MKLFVQLVLFISLFIPYSTKA).

The protein belongs to the TolB family. The Tol-Pal system is composed of five core proteins: the inner membrane proteins TolA, TolQ and TolR, the periplasmic protein TolB and the outer membrane protein Pal. They form a network linking the inner and outer membranes and the peptidoglycan layer.

Its subcellular location is the periplasm. In terms of biological role, part of the Tol-Pal system, which plays a role in outer membrane invagination during cell division and is important for maintaining outer membrane integrity. This is Tol-Pal system protein TolB from Wolbachia pipientis subsp. Culex pipiens (strain wPip).